The sequence spans 427 residues: MSRSEDLFAKAQKHIPGGVNSPVRAFKSVGGTPLFFKHAEGAYVVDEDDKRYVDYVGSWGPMILGHGHPDVLDSVRKQLEHGLSYGAPTAMETDMADLVCSLVPSMEMVRMVSSGTEATMSAIRLARGYTGRDAIIKFEGCYHGHSDSLLVKAGSGLLTQGVPSSAGVPADFAKHTLTLPFNDIAAVEKTLAEVSQTVACIIVEPVAGNMNCVPPAPGFLEGLREQCDKHGVVLIFDEVMTGFRVSLGGAQGHYGIKPDLSTFGKIVGGGMPVGCFGGKREIMGCIAPLGPVYQAGTLSGNPLAMAAGLTTLKLISRPGFHAELTDYTSRMLDGLQQRADAAGVPFVTTQAGAMFGLYFSGADDIVTFEDVMASDAERFKRFFHLMLDGGVYLAPSAFEAGFTSIAHGDKELQITLDAAEKAFAALK.

At K265 the chain carries N6-(pyridoxal phosphate)lysine.

This sequence belongs to the class-III pyridoxal-phosphate-dependent aminotransferase family. HemL subfamily. As to quaternary structure, homodimer. The cofactor is pyridoxal 5'-phosphate.

Its subcellular location is the cytoplasm. It catalyses the reaction (S)-4-amino-5-oxopentanoate = 5-aminolevulinate. It participates in porphyrin-containing compound metabolism; protoporphyrin-IX biosynthesis; 5-aminolevulinate from L-glutamyl-tRNA(Glu): step 2/2. This is Glutamate-1-semialdehyde 2,1-aminomutase from Pseudomonas putida (strain GB-1).